A 218-amino-acid chain; its full sequence is ETS domain-containing protein ets-7 (218 aa).

Positions 12-93 (QRLLNFLRGL…KGKDSRYCFL (82 aa)) form a DNA-binding region, ETS. Over residues 131–161 (TSNFSLQSSPSSSSNSSSARTMSATSSPTSS) the composition is skewed to low complexity. A disordered region spans residues 131-162 (TSNFSLQSSPSSSSNSSSARTMSATSSPTSSL).

The protein belongs to the ETS family.

The protein localises to the nucleus. Its function is as follows. Probable transcription factor. Involved in responses to oxidative stress. This is ETS domain-containing protein ets-7 from Caenorhabditis elegans.